Reading from the N-terminus, the 697-residue chain is Serotransferrin (697 aa).

The signal sequence occupies residues 1–19 (MRLTVGALLACAALGLCLA). Transferrin-like domains are found at residues 25-347 (VKWC…NQQE) and 360-682 (VKWC…NMRK). Disulfide bonds link Cys28–Cys67 and Cys38–Cys58. Arg42 carries the post-translational modification Dimethylated arginine. Residues Asp82 and Tyr114 each coordinate Fe(3+). Cystine bridges form between Cys137/Cys213, Cys156/Cys350, Cys177/Cys193, Cys180/Cys196, Cys190/Cys198, Cys246/Cys260, Cys363/Cys395, and Cys373/Cys386. Residues Thr139, Arg143, Ala145, and Gly146 each contribute to the hydrogencarbonate site. Residue Tyr207 participates in Fe(3+) binding. His268 is a binding site for Fe(3+). Ser388 is subject to Phosphoserine. Asp410 and Tyr448 together coordinate Fe(3+). 8 disulfides stabilise this stretch: Cys420/Cys692, Cys435/Cys655, Cys472/Cys543, Cys496/Cys683, Cys506/Cys520, Cys517/Cys526, Cys583/Cys597, and Cys633/Cys638. 4 residues coordinate hydrogencarbonate: Thr474, Arg478, Ala480, and Gly481. N-linked (GlcNAc...) asparagine glycosylation is present at Asn513. Residue Tyr537 participates in Fe(3+) binding. His605 lines the Fe(3+) pocket. Ser684 is subject to Phosphoserine.

The protein belongs to the transferrin family. In terms of assembly, monomer. Part of a complex composed of SLC40A1/ferroportin, TF/transferrin and HEPH/hephaestin that transfers iron from cells to transferrin. As to expression, expressed by the liver and secreted in plasma.

The protein localises to the secreted. Its function is as follows. Transferrins are iron binding transport proteins which can bind two Fe(3+) ions in association with the binding of an anion, usually bicarbonate. It is responsible for the transport of iron from sites of absorption and heme degradation to those of storage and utilization. Serum transferrin may also have a further role in stimulating cell proliferation. The protein is Serotransferrin (Tf) of Mus musculus (Mouse).